A 786-amino-acid polypeptide reads, in one-letter code: Endonuclease MutS2 (786 aa).

334-341 (GPNTGGKT) provides a ligand contact to ATP. The Smr domain maps to 711–786 (LDLRGERYEN…GNGATVVYFK (76 aa)).

It belongs to the DNA mismatch repair MutS family. MutS2 subfamily. In terms of assembly, homodimer. Binds to stalled ribosomes, contacting rRNA.

Endonuclease that is involved in the suppression of homologous recombination and thus may have a key role in the control of bacterial genetic diversity. In terms of biological role, acts as a ribosome collision sensor, splitting the ribosome into its 2 subunits. Detects stalled/collided 70S ribosomes which it binds and splits by an ATP-hydrolysis driven conformational change. Acts upstream of the ribosome quality control system (RQC), a ribosome-associated complex that mediates the extraction of incompletely synthesized nascent chains from stalled ribosomes and their subsequent degradation. Probably generates substrates for RQC. This is Endonuclease MutS2 from Ligilactobacillus salivarius (strain UCC118) (Lactobacillus salivarius).